The sequence spans 336 residues: F420-dependent glucose-6-phosphate dehydrogenase (336 aa).

Aspartate 39 lines the coenzyme F420-(gamma-Glu)n pocket. Histidine 40 serves as the catalytic Proton donor. Coenzyme F420-(gamma-Glu)n contacts are provided by residues threonine 76 and 107–108 (TG). Glutamate 109 acts as the Proton acceptor in catalysis. Coenzyme F420-(gamma-Glu)n contacts are provided by residues asparagine 112, 177–178 (GG), and 180–181 (AV). Positions 195, 198, 259, and 283 each coordinate substrate.

The protein belongs to the F420-dependent glucose-6-phosphate dehydrogenase family. Homodimer.

It carries out the reaction oxidized coenzyme F420-(gamma-L-Glu)(n) + D-glucose 6-phosphate + H(+) = 6-phospho-D-glucono-1,5-lactone + reduced coenzyme F420-(gamma-L-Glu)(n). Functionally, catalyzes the coenzyme F420-dependent oxidation of glucose 6-phosphate (G6P) to 6-phosphogluconolactone. Appears to have a role in resistance to oxidative stress, via its consumption of G6P that serves as a source of reducing power to combat oxidative stress in mycobacteria. In Mycobacterium avium (strain 104), this protein is F420-dependent glucose-6-phosphate dehydrogenase.